A 355-amino-acid chain; its full sequence is Protein RecA (355 aa).

69 to 76 (GPESSGKT) is an ATP binding site. The interval 329–355 (AYGLPDREETKREETAQIPDTEKTKDV) is disordered.

Belongs to the RecA family.

The protein resides in the cytoplasm. Functionally, can catalyze the hydrolysis of ATP in the presence of single-stranded DNA, the ATP-dependent uptake of single-stranded DNA by duplex DNA, and the ATP-dependent hybridization of homologous single-stranded DNAs. It interacts with LexA causing its activation and leading to its autocatalytic cleavage. This chain is Protein RecA, found in Desulfotalea psychrophila (strain LSv54 / DSM 12343).